The sequence spans 219 residues: Aspartic protease inhibitor 10 (219 aa).

The first 23 residues, Met1–Thr23, serve as a signal peptide directing secretion. Residues Ser24–Ser32 constitute a propeptide that is removed on maturation. Positions Asn26–Pro31 match the Vacuolar targeting signal motif. Residue Asn51 is glycosylated (N-linked (GlcNAc...) asparagine). Disulfide bonds link Cys80–Cys125 and Cys173–Cys184.

It belongs to the protease inhibitor I3 (leguminous Kunitz-type inhibitor) family. In terms of tissue distribution, in tubers and green buds of untreated plants. After abscisic acid treatment or mechanical wounding is mostly accumulated in leaves, to a lesser extent in stems, but not in roots.

In terms of biological role, inhibitor of cathepsin D (aspartic protease) and trypsin (serine protease). Protects the plant by inhibiting proteases of invading organisms. The chain is Aspartic protease inhibitor 10 (CDI) from Solanum tuberosum (Potato).